We begin with the raw amino-acid sequence, 484 residues long: Poly(A) polymerase alpha-B (484 aa).

The Nuclear localization signal 1 motif lies at 240 to 257 (RKQLHQLLPSHVLPKKKK). Disordered stretches follow at residues 276–314 (SVDSDNSMSVPSPTNATRTSPLNSTGLSQGNSPATPVSL), 326–356 (VPQNNSTENSGGSLNESIPETATHPAFSSTP), and 375–484 (KPVT…RLNR). A Nuclear localization signal 2 motif is present at residues 392–407 (KRTSSPTNEESPKKTK). The segment covering 423–441 (EQNKLEPEELKEVHSEEKS) has biased composition (basic and acidic residues). The span at 451-464 (SSQRSSSTDLSDIS) shows a compositional bias: low complexity.

Belongs to the poly(A) polymerase family. As to quaternary structure, monomer.

The protein localises to the nucleus. It carries out the reaction RNA(n) + ATP = RNA(n)-3'-adenine ribonucleotide + diphosphate. In terms of biological role, polymerase that creates the 3'-poly(A) tail of mRNA's. May acquire specificity through interaction with a cleavage and polyadenylation factor (CPSF). The chain is Poly(A) polymerase alpha-B (papola-b) from Xenopus laevis (African clawed frog).